Reading from the N-terminus, the 60-residue chain is Large ribosomal subunit protein uL30 (60 aa).

It belongs to the universal ribosomal protein uL30 family. In terms of assembly, part of the 50S ribosomal subunit.

The sequence is that of Large ribosomal subunit protein uL30 from Syntrophomonas wolfei subsp. wolfei (strain DSM 2245B / Goettingen).